Reading from the N-terminus, the 274-residue chain is Large ribosomal subunit protein uL2cz/uL2cy (274 aa).

Positions 224–253 (NPIDHPHGGGEGRAPIGRKKPTTPWGYPAL) are disordered.

Belongs to the universal ribosomal protein uL2 family. In terms of assembly, part of the 50S ribosomal subunit.

The protein resides in the plastid. In Epifagus virginiana (Beechdrops), this protein is Large ribosomal subunit protein uL2cz/uL2cy (rpl2-A).